We begin with the raw amino-acid sequence, 423 residues long: MLPPQKKPWESMAKGLVLGALFTSFLLLVYSYAVPPLHAGLASTTPEAAASCSPPALEPEAVIRANGSAGECQPRRNIVFLKTHKTASSTLLNILFRFGQKHRLKFAFPNGRNDFDYPTFFARSLVQDYRPGACFNIICNHMRFHYDEVRGLVPTNAIFITVLRDPARLFESSFHYFGPVVPLTWKLSAGDKLTEFLQDPDRYYDPNGFNAHYLRNLLFFDLGYDNSLDPSSPQVQEHILEVERRFHLVLLQEYFDESLVLLKDLLCWELEDVLYFKLNARRDSPVPRLSGELYGRATAWNMLDSHLYRHFNASFWRKVEAFGRERMAREVAALRHANERMRTICIDGGHAVDAAAIQDEAMQPWQPLGTKSILGYNLKKSIGQRHAQLCRRMLTPEIQYLMDLGANLWVTKLWKFIRDFLRW.

Residues 1-14 (MLPPQKKPWESMAK) are Cytoplasmic-facing. A helical; Signal-anchor for type II membrane protein transmembrane segment spans residues 15–35 (GLVLGALFTSFLLLVYSYAVP). Residues 36–423 (PLHAGLASTT…WKFIRDFLRW (388 aa)) are Lumenal-facing. N-linked (GlcNAc...) asparagine glycans are attached at residues asparagine 66 and asparagine 312.

Belongs to the galactose-3-O-sulfotransferase family. In terms of tissue distribution, expressed in kidney proximal tubule, gastric mucosa and adenocarcinoma. Highly expressed in renal cell carcinoma cell lines.

It is found in the golgi apparatus membrane. It catalyses the reaction a beta-D-galactosyl-(1&lt;-&gt;1')-N-acylsphing-4-enine + 3'-phosphoadenylyl sulfate = an N-acyl-1-beta-D-(3-O-sulfo)-galactosyl-sphing-4-enine + adenosine 3',5'-bisphosphate + H(+). It carries out the reaction a 1-O-alkyl-2-acyl-3-O-(beta-D-galactosyl)-sn-glycerol + 3'-phosphoadenylyl sulfate = a 1-O-alkyl-2-acyl-3-(beta-D-3-sulfogalactosyl)-sn-glycerol + adenosine 3',5'-bisphosphate + H(+). The catalysed reaction is a beta-D-Gal-(1&lt;-&gt;1')-ceramide + 3'-phosphoadenylyl sulfate = 1-(3-O-sulfo-beta-D-galactosyl)-ceramide + adenosine 3',5'-bisphosphate + H(+). The enzyme catalyses a 1,2-diacyl-3-O-(beta-D-galactosyl)-sn-glycerol + 3'-phosphoadenylyl sulfate = 1,2-diacyl-3-(3-O-sulfo-beta-D-galactosyl)-sn-glycerol + adenosine 3',5'-bisphosphate + H(+). It catalyses the reaction a beta-D-Gal-(1-&gt;4)-beta-D-Glc-(1&lt;-&gt;1)-Cer(d18:1(4E)) + 3'-phosphoadenylyl sulfate = beta-D-3-sulfogalactosyl-(1-&gt;4)-beta-D-glucosyl-(1&lt;-&gt;1')-N-acylsphing-4-enine + adenosine 3',5'-bisphosphate + H(+). It participates in lipid metabolism; sphingolipid metabolism. In terms of biological role, catalyzes the transfer of a sulfate group to position 3 of non-reducing beta-galactosyl residues in glycerolipids and sphingolipids, therefore participates in the biosynthesis of sulfoglycolipids. Catalyzes the synthesis of galactosylceramide sulfate (sulfatide), a major lipid component of the myelin sheath and of monogalactosylalkylacylglycerol sulfate (seminolipid), present in spermatocytes. Seems to prefer beta-glycosides at the non-reducing termini of sugar chains attached to a lipid moiety. Also acts on lactosylceramide, galactosyl 1-alkyl-2-sn-glycerol and galactosyl diacylglycerol (in vitro). This Homo sapiens (Human) protein is Galactosylceramide sulfotransferase.